The primary structure comprises 295 residues: Homeobox protein XHOX-7.1 (295 aa).

Disordered regions lie at residues 75–115 (RKPG…PISL) and 134–175 (KPES…KPRT). Residues 84-97 (SSPTGSPLAGTSHS) show a composition bias toward polar residues. Positions 141 to 153 (SSWIQSPSFSPSP) are enriched in low complexity. The segment covering 164–174 (LRKHKTNRKPR) has biased composition (basic residues). Residues 170–229 (NRKPRTPFTTSQLLALERKFRQKQYLSIAERAEFSSSLNLTETQVKIWFQNRRAKAKRLQ) constitute a DNA-binding region (homeobox).

This sequence belongs to the Msh homeobox family.

The protein localises to the nucleus. This is Homeobox protein XHOX-7.1 from Xenopus laevis (African clawed frog).